Here is a 280-residue protein sequence, read N- to C-terminus: Urease accessory protein UreD 1 (280 aa).

Belongs to the UreD family. As to quaternary structure, ureD, UreF and UreG form a complex that acts as a GTP-hydrolysis-dependent molecular chaperone, activating the urease apoprotein by helping to assemble the nickel containing metallocenter of UreC. The UreE protein probably delivers the nickel.

The protein resides in the cytoplasm. Its function is as follows. Required for maturation of urease via the functional incorporation of the urease nickel metallocenter. In Bradyrhizobium sp. (strain BTAi1 / ATCC BAA-1182), this protein is Urease accessory protein UreD 1.